The following is a 176-amino-acid chain: MAIRLEDKKAIVAEVNETAGAALSVVLADYRGVTSGDMTALRAKARAENVRLKVVRNNLAKIAIRGTEFECIDPALVGPTILAFSMEDPGAAARLLKDFAKEKEAFEIKGLAVGGELMGAEQIDRLATLPTLHEALTKLAIVTQAPVTKLARTLNDIPGRITRVVAAVRDQKQDAA.

The protein belongs to the universal ribosomal protein uL10 family. In terms of assembly, part of the ribosomal stalk of the 50S ribosomal subunit. The N-terminus interacts with L11 and the large rRNA to form the base of the stalk. The C-terminus forms an elongated spine to which L12 dimers bind in a sequential fashion forming a multimeric L10(L12)X complex.

Its function is as follows. Forms part of the ribosomal stalk, playing a central role in the interaction of the ribosome with GTP-bound translation factors. This chain is Large ribosomal subunit protein uL10, found in Marinobacter nauticus (strain ATCC 700491 / DSM 11845 / VT8) (Marinobacter aquaeolei).